The sequence spans 212 residues: Large ribosomal subunit protein uL1 (212 aa).

The protein belongs to the universal ribosomal protein uL1 family. As to quaternary structure, part of the 50S ribosomal subunit.

In terms of biological role, binds directly to 23S rRNA. Probably involved in E site tRNA release. Functionally, protein L1 is also a translational repressor protein, it controls the translation of its operon by binding to its mRNA. This is Large ribosomal subunit protein uL1 from Haloferax volcanii (strain ATCC 29605 / DSM 3757 / JCM 8879 / NBRC 14742 / NCIMB 2012 / VKM B-1768 / DS2) (Halobacterium volcanii).